The chain runs to 284 residues: Bifunctional protein FolD (284 aa).

NADP(+) contacts are provided by residues 166–168 and Ile-232; that span reads GAS.

The protein belongs to the tetrahydrofolate dehydrogenase/cyclohydrolase family. In terms of assembly, homodimer.

The enzyme catalyses (6R)-5,10-methylene-5,6,7,8-tetrahydrofolate + NADP(+) = (6R)-5,10-methenyltetrahydrofolate + NADPH. The catalysed reaction is (6R)-5,10-methenyltetrahydrofolate + H2O = (6R)-10-formyltetrahydrofolate + H(+). It participates in one-carbon metabolism; tetrahydrofolate interconversion. Functionally, catalyzes the oxidation of 5,10-methylenetetrahydrofolate to 5,10-methenyltetrahydrofolate and then the hydrolysis of 5,10-methenyltetrahydrofolate to 10-formyltetrahydrofolate. This Pseudomonas fluorescens (strain ATCC BAA-477 / NRRL B-23932 / Pf-5) protein is Bifunctional protein FolD.